A 431-amino-acid polypeptide reads, in one-letter code: Venom metalloproteinase 1 (431 aa).

The first 22 residues, 1–22 (MDLFILTRFILFLSFFMKSIHC), serve as a signal peptide directing secretion. N-linked (GlcNAc...) asparagine glycans are attached at residues asparagine 64, asparagine 113, asparagine 148, and asparagine 187. Residues 228–428 (DLLMKTSRRL…TSAACLKDTY (201 aa)) form the Peptidase M12B domain. 2 disulfides stabilise this stretch: cysteine 340–cysteine 423 and cysteine 379–cysteine 407. Histidine 363 is a binding site for Zn(2+). Glutamate 364 is an active-site residue. Zn(2+)-binding residues include histidine 367 and histidine 373. N-linked (GlcNAc...) asparagine glycosylation occurs at asparagine 414.

In the C-terminal section; belongs to the venom metalloproteinase (M12B) family. Monomer. Requires Zn(2+) as cofactor. Expressed by the venom gland.

It is found in the secreted. Its activity is regulated as follows. The gelatinase activity is inhibited by EDTA. Functionally, the recombinant protein has gelatinase activity. In vivo, injection of this recombinant into fifth instar L.oleracea (host) larvae results in partial insect mortality associated with the molt to sixth instar, with surviving insects showing retarded development and growth. The sequence is that of Venom metalloproteinase 1 from Eulophus pennicornis (Parasitoid wasp).